The primary structure comprises 874 residues: Alanine--tRNA ligase (874 aa).

Zn(2+) is bound by residues histidine 562, histidine 566, cysteine 664, and histidine 668.

It belongs to the class-II aminoacyl-tRNA synthetase family. Zn(2+) serves as cofactor.

It localises to the cytoplasm. It catalyses the reaction tRNA(Ala) + L-alanine + ATP = L-alanyl-tRNA(Ala) + AMP + diphosphate. Functionally, catalyzes the attachment of alanine to tRNA(Ala) in a two-step reaction: alanine is first activated by ATP to form Ala-AMP and then transferred to the acceptor end of tRNA(Ala). Also edits incorrectly charged Ser-tRNA(Ala) and Gly-tRNA(Ala) via its editing domain. This chain is Alanine--tRNA ligase, found in Shewanella baltica (strain OS155 / ATCC BAA-1091).